The primary structure comprises 147 residues: MVMGLGVLLLVFVLGLGLTPPTLAQDNSRYTHFLTQHYDAKPQGRDDRYCESIMRRRGLTSPCKDINTFIHGNKRSIKAICENKNGNPHRENLRISKSSFQVTTCKLHGGSPWPPCQYRATAGFRNVVVACENGLPVHLDQSIFRRP.

The first 24 residues, 1–24, serve as a signal peptide directing secretion; that stretch reads MVMGLGVLLLVFVLGLGLTPPTLA. Q25 carries the pyrrolidone carboxylic acid modification. Catalysis depends on H37, which acts as the Proton acceptor. TRNA-binding residues include R45 and D46. Cystine bridges form between C50–C105, C63–C116, and C81–C131. The Nucleolar localization signal signature appears at 55 to 59; sequence RRRGL. Positions 105 and 127 each coordinate tRNA. H138 functions as the Proton donor in the catalytic mechanism.

This sequence belongs to the pancreatic ribonuclease family. Homodimer. Interacts with RNH1; inhibiting ANG ribonuclease activity. Interacts with PCNA.

It is found in the secreted. Its subcellular location is the nucleus. The protein resides in the nucleolus. It localises to the cytoplasm. The protein localises to the stress granule. With respect to regulation, has weak tRNA ribonuclease activity by itself due to partial autoinhibition by its C-terminus, which folds into a short alpha-helix that partially occludes the substrate-binding site. In absence of stress, the ribonuclease activity is inhibited by RNH1 in the cytoplasm. In response to stress, dissociates from RNH1 in the cytoplasm and associates with cytoplasmic ribosomes with vacant A-sites: ribosomes directly activate the tRNA ribonuclease activity of ANG by refolding the C-terminal alpha-helix. In response to stress, the angiogenic activity of ANG is inhibited by RNH1 in the nucleus. In terms of biological role, secreted ribonuclease that can either promote or restrict cell proliferation of target cells, depending on the context. Endocytosed in target cells via its receptor PLXNB2 and translocates to the cytoplasm or nucleus. Under stress conditions, localizes to the cytoplasm and promotes the assembly of stress granules (SGs): specifically cleaves a subset of tRNAs within anticodon loops to produce tRNA-derived stress-induced fragments (tiRNAs), resulting in translation repression and inhibition of cell proliferation. tiRNas also prevent formation of apoptosome, thereby promoting cell survival. Preferentially cleaves RNAs between a pyrimidine and an adenosine residue, suggesting that it cleaves the anticodon loop of tRNA(Ala) (32-UUAGCAU-38) after positions 33 and 36. Cleaves a subset of tRNAs, including tRNA(Ala), tRNA(Glu), tRNA(Gly), tRNA(Lys), tRNA(Val), tRNA(His), tRNA(Asp) and tRNA(Sec). Under growth conditions and in differentiated cells, translocates to the nucleus and stimulates ribosomal RNA (rRNA) transcription, including that containing the initiation site sequences of 45S rRNA, thereby promoting cell growth and proliferation. Angiogenin induces vascularization of normal and malignant tissues via its ability to promote rRNA transcription. Involved in hematopoietic stem and progenitor cell (HSPC) growth and survival by promoting rRNA transcription in growth conditions and inhibiting translation in response to stress, respectively. Mediates the crosstalk between myeloid and intestinal epithelial cells to protect the intestinal epithelial barrier integrity: secreted by myeloid cells and promotes intestinal epithelial cells proliferation and survival. Also mediates osteoclast-endothelial cell crosstalk in growing bone: produced by osteoclasts and protects the neighboring vascular cells against senescence by promoting rRNA transcription. In Gorilla gorilla gorilla (Western lowland gorilla), this protein is Angiogenin (ANG).